Here is a 301-residue protein sequence, read N- to C-terminus: MARTPQSTPLLISLSVLALLQTSYAGGIAIYWGQNGNEGTLTQTCNTGKYSYVNIAFLNKFGNGQTPEINLAGHCNPASNGCTSVSTGIRNCQNRGIKVMLSIGGGAGSYSLSSSNDAQNVANYLWNNFLGGQSSSRPLGDAVLDGIDFDIELGSTLHWDDLARALSRIEFQQERGRKVYLTAAPQCPFPDKVPGTALNTGLFDYVWVQFYNNPPCQYSSGNTNNLLNSWNRWTSSINSTGSFMGLPASSAAAGRGFIPANVLTSQILPVIKRSPKYGGVMLWSKYYDDQSGYSSSIKSSV.

A signal peptide spans 1–25; sequence MARTPQSTPLLISLSVLALLQTSYA. A GH18 domain is found at 26–301; the sequence is GGIAIYWGQN…GYSSSIKSSV (276 aa). 2 disulfide bridges follow: C45–C92 and C75–C82. E152 functions as the Proton donor in the catalytic mechanism. A disulfide bridge connects residues C187 and C216.

Belongs to the glycosyl hydrolase 18 family. Chitinase class II subfamily.

It carries out the reaction Random endo-hydrolysis of N-acetyl-beta-D-glucosaminide (1-&gt;4)-beta-linkages in chitin and chitodextrins.. In terms of biological role, defense against chitin containing fungal pathogens. In Vitis vinifera (Grape), this protein is Acidic endochitinase (CHIT3).